The chain runs to 630 residues: MDICCKDIISDHSKKDIISDLPEALICHILSFLPIEDSALTSVLSKKWQHLFAFRPNLEFDDAVVYLNPDGERNETIFENFVDRVLSLQGDYPINKFSLTCRDFTDPTCVSRWISNVMERGVSDLDLRCIVYWDNGTMPPDIFVSKALVHLRIETGNGAFIDVEDVFLPNLKTLYLNKVLLRHSDNGFVKLITSCHVLEDLFIMNICWDGYLKRSLSSKTLKRLTFFCEDVHAVNPESVSFDTPNLVYFVYHDCVADKYKNMNFDSLVYASICLQMTSHQRTHASYEHLVGNATDFLLGISNVQILELFANTIEVLTFCCEQIPVFKNLVCLIIKTDQKAGWESLPVLLKNCPDLESLIFDGLHHNDTIKCEDVDGCLCKSSRGIPSCLSSSPVQFLTIWKFGEICDDYDDMEKQIELVMYFLETMPNLEEMKLFYDTQIYEDVISKLQMDLRRTLSLRSLFNARCYQPSCSGIIQRDDVHEEKPHYGSFLHQRSFSSSMILSQQHMMRSPSHFPLCSPFGVSTYRPMSTSHISGSDESGDVNHVAETLTDLVQQDTVIEVADAAIDSSIQLDFVQQIVHNVHSLTGLNWWASIVFTTFLIRGVTIPLMIECERWFSKRMVIKQCSFVNT.

Positions 15 to 63 constitute an F-box domain; it reads KDIISDLPEALICHILSFLPIEDSALTSVLSKKWQHLFAFRPNLEFDDA. LRR repeat units follow at residues 101–129, 152–178, 180–205, 228–253, 300–325, 337–362, 406–436, 437–465, and 567–590; these read CRDF…DLRC, RIET…YLNK, LLRH…FIMN, CEDV…VYHD, ISNV…QIPV, DQKA…IFDG, CDDY…KLFY, DTQI…FNAR, and DSSI…GLNW.

In Arabidopsis thaliana (Mouse-ear cress), this protein is Putative F-box/LRR-repeat protein At3g49150.